A 93-amino-acid polypeptide reads, in one-letter code: Small ribosomal subunit protein uS19 (93 aa).

The protein belongs to the universal ribosomal protein uS19 family.

Its function is as follows. Protein S19 forms a complex with S13 that binds strongly to the 16S ribosomal RNA. This chain is Small ribosomal subunit protein uS19, found in Ehrlichia ruminantium (strain Welgevonden).